A 1789-amino-acid polypeptide reads, in one-letter code: Genome polyprotein (1789 aa).

The interval methionine 1 to lysine 25 is disordered. An interaction with host MAP1LC3A/LC3 region spans residues methionine 1–arginine 183. Over residues alanine 12–serine 23 the composition is skewed to low complexity. Residues serine 184–glutamine 398 are interaction with NTPase. The interaction with NS4 stretch occupies residues histidine 301–glutamine 398. 2 host ER membrane association regions span residues lysine 318 to asparagine 349 and threonine 360 to glutamine 398. The interaction with NS1-2 and NS4 and homooligomerization stretch occupies residues glycine 399–alanine 574. The SF3 helicase domain occupies arginine 532–aspartate 697. Glycine 560–threonine 567 contributes to the ATP binding site. Positions alanine 651 to aspartate 756 are important for mitochondrion targeting. A functions as endoplasmic reticulum export signal region spans residues tyrosine 826–glycine 832. The host membrane association stretch occupies residues arginine 865 to proline 910. Positions aspartate 958–alanine 981 are disordered. The span at lysine 966–lysine 976 shows a compositional bias: basic residues. The tract at residues aspartate 989 to glutamate 994 is acidic. The residue at position 992 (tyrosine 992) is an O-(5'-phospho-RNA)-tyrosine. The tract at residues tryptophan 1084–glutamate 1100 is interaction with host EIF4G. Positions alanine 1101–glutamate 1281 constitute a Peptidase C37 domain. Active-site for 3CLpro activity residues include histidine 1130, glutamate 1154, and cysteine 1239. Residues lysine 1516 to arginine 1637 enclose the RdRp catalytic domain. Positions 1520, 1522, 1624, and 1625 each coordinate Mg(2+).

As to quaternary structure, homodimer. Homooligomer. Interacts with NTPase; this interaction increases the proapoptotic activity of the NTPase and is crucial for the formation of the viral replication complex. Interacts with NS4; this interaction is crucial for the formation of the viral replication complex. Interacts (via N-terminus) with host VAPA. Interacts with host MAP1LC3A/LC3; this interaction does not seem to be linked to host autophagy, but rather plays a role in the formation of viral factories. Homooligomer. Interacts with NS1-2; this interaction increases the proapoptotic activity of the NTPase and is crucial for the formation of the viral replication complex. Interacts with NS4; this interaction increases the proapoptotic activity of the NTPase. In terms of assembly, homodimer. Monomer; in solution. As to quaternary structure, interacts with NTPase; this interaction increases the proapoptotic activity of the NTPase. Interacts with NS1-2; this interaction is crucial for the formation of the viral replication complex. Monomer. Interacts with the RNA-directed RNA polymerase; this interaction induces the multimerization of the RdRp and enhances its activity. Interacts with host IEF4G1; this interaction plays a role in translation of viral proteins. In terms of assembly, homohexamer; also forms fibrous hexameric oligomer. Interacts with the viral genome-linked protein; this interaction induces the multimerization of the RdRp and enhances its activity. The cofactor is Mg(2+). It depends on Mn(2+) as a cofactor. Specific enzymatic cleavages in vivo yield mature proteins. 3CLpro is first autocatalytically cleaved, then processes the whole polyprotein. NS1/2-3 and NS3-4 sites are cleaved rapidly and NS4-5, NS5-6, and NS6-7 sites are processed subsequently and less efficiently. Post-translationally, VPg is uridylylated by the polymerase and is covalently attached to the 5'-end of the polyadenylated genomic and subgenomic RNAs. This uridylylated form acts as a nucleotide-peptide primer for the polymerase. In terms of processing, cleaved by host CASP3/caspase 3 at 18-22 h.p.i. The cleavage allows NS1 secretion, which is essential for intestinal infection and resistance to IFN-lambda.

The protein localises to the host Golgi apparatus membrane. It localises to the secreted. The protein resides in the host endoplasmic reticulum membrane. Its subcellular location is the host cytoplasm. It is found in the host perinuclear region. It carries out the reaction a ribonucleoside 5'-triphosphate + H2O = a ribonucleoside 5'-diphosphate + phosphate + H(+). The enzyme catalyses Endopeptidase with a preference for cleavage when the P1 position is occupied by Glu-|-Xaa and the P1' position is occupied by Gly-|-Yaa.. The catalysed reaction is RNA(n) + a ribonucleoside 5'-triphosphate = RNA(n+1) + diphosphate. With respect to regulation, inhibited by the chemical compound K36/GC376, which covalently binds to the nucleophilic cysteine residue. Inhibited by various macrocyclic inhibitors. Its activity is regulated as follows. Inhibited by the guanidine salt GuHCl. Functionally, induces the proliferation of the host smooth ER membranes forming long tubular structures. These remodeled membranes probably form the viral factories that contain the replication complex. Induces the disassembly of host Golgi. May play a role in viral replication by interacting with host VAPA, a vesicle-associated membrane protein that plays a role in SNARE-mediated vesicle fusion. This interaction may target replication complex to intracellular membranes. Displays NTPase activity and RNA helix-unwinding activity. Displays RNA chaperone-like activity and destabilizes dsRNA. Induces the formation of convoluted membranes derived from the host ER. These remodeled membranes probably form the viral factories that contain the replication complex. Initiates host cell death by targeting the mitochondrial outer membrane, leading to the permeabilization of mitochondria, programmed host cell death and viral egress. Probably plays a role in preventing the assembly of host stress granules. In terms of biological role, probable key protein responsible for the formation of membrane alterations by the virus. Induces the formation of convoluted membranes derived from the host ER. These remodeled membranes probably form the viral factories that contain the replication complex. May play a role in targeting replication complex to intracellular membranes. Induces the disassembly of host Golgi and antagonism of Golgi-dependent cellular protein secretion, probably via the mislocalization of COPII-coated vesicles. Its function is as follows. Viral genome-linked protein is covalently linked to the 5'-end of the positive-strand, negative-strand genomic RNAs and subgenomic RNA. Acts as a genome-linked replication primer. May recruit ribosome to viral RNA thereby promoting viral proteins translation. Interacts with host translation initiation complex to allow the translation of viral proteins. Induces the formation of aggregates of RNA-directed RNA polymerase in the presence of RNA. Through its interaction with the viral RNA-directed RNA polymerase, plays a crucial role in enhancing the polymerase activity. Functionally, processes the polyprotein. 3CLpro-RdRp is first released by autocleavage, then all other proteins are cleaved. May cleave host polyadenylate-binding protein thereby inhibiting cellular translation. Replicates genomic and antigenomic RNA by recognizing replications specific signals. Also transcribes a subgenomic mRNA by initiating RNA synthesis internally on antigenomic RNA. This sgRNA codes for structural proteins. Catalyzes the covalent attachment VPg with viral RNAs. This Norovirus (strain Human/NoV/United States/Norwalk/1968/GI) (Hu/NV/NV/1968/US) protein is Genome polyprotein.